Reading from the N-terminus, the 256-residue chain is Eukaryotic translation initiation factor 3 subunit J (256 aa).

Residues 1–67 (MAAAAAGDSD…KEEAEVKPEV (67 aa)) are sufficient for interaction with EIF3B. A disordered region spans residues 1-106 (MAAAAAGDSD…LEEPEEPKVL (106 aa)). Ser9, Ser11, and Ser18 each carry phosphoserine. Over residues 38–57 (EGEDEDEDVKDNWDDDDDEK) the composition is skewed to acidic residues. Over residues 58–104 (KEEAEVKPEVKISEKKKIAEKIKEKERQQKKRQEEIKKRLEEPEEPK) the composition is skewed to basic and acidic residues. Residues 68 to 133 (KISEKKKIAE…ESDLELAKET (66 aa)) adopt a coiled-coil conformation. A Glycyl lysine isopeptide (Lys-Gly) (interchain with G-Cter in SUMO2) cross-link involves residue Lys104. Thr107 carries the phosphothreonine modification. The residue at position 125 (Ser125) is a Phosphoserine. The tract at residues 214 to 243 (QSKAKKKKKGVVPGGGLKATMKDDLADYGG) is disordered. Positions 241–256 (YGGYDGGYAQDYEDFM) are promotes stable association with the 40S ribosome. Tyr252 carries the phosphotyrosine modification.

This sequence belongs to the eIF-3 subunit J family. As to quaternary structure, component of the eukaryotic translation initiation factor 3 (eIF-3) complex, which is composed of 13 subunits: EIF3A, EIF3B, EIF3C, EIF3D, EIF3E, EIF3F, EIF3G, EIF3H, EIF3I, EIF3J, EIF3K, EIF3L and EIF3M. The eIF-3 complex appears to include 3 stable modules: module A is composed of EIF3A, EIF3B, EIF3G and EIF3I; module B is composed of EIF3F, EIF3H, and EIF3M; and module C is composed of EIF3C, EIF3D, EIF3E, EIF3K and EIF3L. EIF3C of module C binds EIF3B of module A and EIF3H of module B, thereby linking the three modules. EIF3J is a labile subunit that binds to the eIF-3 complex via EIF3B. The eIF-3 complex interacts with RPS6KB1 under conditions of nutrient depletion. Mitogenic stimulation leads to binding and activation of a complex composed of MTOR and RPTOR, leading to phosphorylation and release of RPS6KB1 and binding of EIF4B to eIF-3. In terms of processing, phosphorylated. Phosphorylation is enhanced upon serum stimulation.

It is found in the cytoplasm. Functionally, component of the eukaryotic translation initiation factor 3 (eIF-3) complex, which is required for several steps in the initiation of protein synthesis. The eIF-3 complex associates with the 40S ribosome and facilitates the recruitment of eIF-1, eIF-1A, eIF-2:GTP:methionyl-tRNAi and eIF-5 to form the 43S pre-initiation complex (43S PIC). The eIF-3 complex stimulates mRNA recruitment to the 43S PIC and scanning of the mRNA for AUG recognition. The eIF-3 complex is also required for disassembly and recycling of post-termination ribosomal complexes and subsequently prevents premature joining of the 40S and 60S ribosomal subunits prior to initiation. The eIF-3 complex specifically targets and initiates translation of a subset of mRNAs involved in cell proliferation, including cell cycling, differentiation and apoptosis, and uses different modes of RNA stem-loop binding to exert either translational activation or repression. This subunit binds directly within the mRNA entry channel of the 40S ribosome to the aminoacyl (A) site. It may regulate the interaction between the 43S PIC and mRNA. This Bos taurus (Bovine) protein is Eukaryotic translation initiation factor 3 subunit J.